A 434-amino-acid polypeptide reads, in one-letter code: Protein POLLENLESS 3 (434 aa).

The tract at residues 13–47 is disordered; it reads VYYTPPPARTSDHVAAMPMTERRRPPYSCSSSSER. The Nuclear localization signal 1 signature appears at 34–37; that stretch reads RRRP. 4 TPR repeats span residues 95 to 131, 133 to 164, 191 to 224, and 241 to 274; these read DSAL…ESQD, IDNL…LEQG, ARIL…ERDK, and PEAK…AVEM. A coiled-coil region spans residues 142 to 166; that stretch reads KKSGRIEEEAVLLEHKLQTLEQGMG. Residues 309–329 form a disordered region; sequence TANKNYSDVSSSPASVRPNSA. Positions 310–326 are enriched in polar residues; sequence ANKNYSDVSSSPASVRP. A Nuclear localization signal 2 motif is present at residues 377 to 380; it reads KRKK. Residues 393–408 show a composition bias toward basic and acidic residues; sequence VKDTADGPKSESKKSW. A disordered region spans residues 393 to 434; the sequence is VKDTADGPKSESKKSWADIAEEEEAEEEEEERLQGELKTAEM. Residues 408–434 adopt a coiled-coil conformation; the sequence is WADIAEEEEAEEEEEERLQGELKTAEM. Positions 411 to 423 are enriched in acidic residues; the sequence is IAEEEEAEEEEEE. A compositionally biased stretch (basic and acidic residues) spans 424–434; sequence RLQGELKTAEM.

Belongs to the MS5 protein family. Expressed at low levels mostly in floral organs during meiosis. Also barely detectable in leaves, stems and roots.

It localises to the nucleus. Functionally, essential for male fertility, especially for microspore and pollen grain production. Involved in the regulation of cell division after male meiosis I and II to facilitate exit from meiosis and transition to G1. The protein is Protein POLLENLESS 3 of Arabidopsis thaliana (Mouse-ear cress).